We begin with the raw amino-acid sequence, 20 residues long: ADVPGNYPLNSYGASYYCTI.

Toxin b is a heterodimer composed of toxin alpha and toxin beta. In terms of tissue distribution, expressed by the venom gland.

It is found in the secreted. Binds to sodium channels (Nav) and affects the channel activation process. This Androctonus crassicauda (Arabian fat-tailed scorpion) protein is Toxin b subunit beta.